We begin with the raw amino-acid sequence, 534 residues long: Glycolytic genes transcriptional activator GCR2 (534 aa).

The tract at residues 29 to 122 (LQSVTNSPQT…TGNNASSSAT (94 aa)) is disordered. Low complexity predominate over residues 30-43 (QSVTNSPQTTTNTP). Residues 64–88 (SDSTPNIDEIITSTGSNALTKTNSD) are compositionally biased toward polar residues. Residues 89–122 (SANGTPNGNSSSTSAISNASNPATTGNNASSSAT) are compositionally biased toward low complexity. Serine 151 carries the phosphoserine modification. Residues 230–333 (LTQGRRKGNS…SNPGTNMLFD (104 aa)) form a disordered region. A compositionally biased stretch (polar residues) spans 238 to 252 (NSLNTSTKGSPSDLQ). The segment covering 253 to 279 (GINNGNNNGNNGNIGNGSNIKNYGNKN) has biased composition (low complexity). A Nuclear localization signal motif is present at residues 281 to 288 (PNNRTKKR). Positions 295-304 (NAKNGKNNKN) are enriched in low complexity. A compositionally biased stretch (polar residues) spans 312–328 (ITDTSAFSNTTISNPGT). Residues serine 406 and serine 409 each carry the phosphoserine modification. The segment at 497–534 (IVQLERELELQRQETQWLRKMLIEDMGCVRSMLRDLQR) is leucine-zipper.

In terms of assembly, homodimer via the leucine-zipper domain. Forms a complex with a GCR1 homodimer.

The protein localises to the nucleus. Its function is as follows. Transcriptional activator required for the expression of glycolytic genes. Enhances the CT box-dependent transcriptional activation of a RAP1-GCR1 complex. Required for GCR1 phosphorylation. This is Glycolytic genes transcriptional activator GCR2 (GCR2) from Saccharomyces cerevisiae (strain ATCC 204508 / S288c) (Baker's yeast).